A 63-amino-acid chain; its full sequence is uncharacterized protein (63 aa).

Residues 4-24 traverse the membrane as a helical segment; that stretch reads LNQFILIFLLLIVILFIFFLI.

Its subcellular location is the membrane. This is an uncharacterized protein from Invertebrate iridescent virus 6 (IIV-6).